The following is a 119-amino-acid chain: MDTLCSTLLLLTIPSWVLSQITLKESGPTLVKPTQTLTLTCTFSGFSLSTSGVGVGWIRQPPGKALEWLALIYWDDDKRYSPSLKSRLTITKDTSKNQVVLTMTNMDPVDTATYYCAHR.

The signal sequence occupies residues Met-1 to Ser-19. Gln-20 is subject to Pyrrolidone carboxylic acid. Residues Gln-20 to Ser-44 form a framework-1 region. The region spanning Gln-20–Arg-119 is the Ig-like domain. A disulfide bond links Cys-41 and Cys-116. Residues Gly-45–Gly-54 are complementarity-determining-1. The framework-2 stretch occupies residues Val-55–Leu-71. The tract at residues Ile-72–Lys-78 is complementarity-determining-2. The interval Arg-79–Cys-116 is framework-3. Positions Ala-117 to Arg-119 are complementarity-determining-3.

As to quaternary structure, immunoglobulins are composed of two identical heavy chains and two identical light chains; disulfide-linked.

The protein localises to the secreted. It localises to the cell membrane. V region of the variable domain of immunoglobulin heavy chains that participates in the antigen recognition. Immunoglobulins, also known as antibodies, are membrane-bound or secreted glycoproteins produced by B lymphocytes. In the recognition phase of humoral immunity, the membrane-bound immunoglobulins serve as receptors which, upon binding of a specific antigen, trigger the clonal expansion and differentiation of B lymphocytes into immunoglobulins-secreting plasma cells. Secreted immunoglobulins mediate the effector phase of humoral immunity, which results in the elimination of bound antigens. The antigen binding site is formed by the variable domain of one heavy chain, together with that of its associated light chain. Thus, each immunoglobulin has two antigen binding sites with remarkable affinity for a particular antigen. The variable domains are assembled by a process called V-(D)-J rearrangement and can then be subjected to somatic hypermutations which, after exposure to antigen and selection, allow affinity maturation for a particular antigen. The chain is Immunoglobulin heavy variable 2-5 from Homo sapiens (Human).